A 517-amino-acid polypeptide reads, in one-letter code: Maturase K (517 aa).

This sequence belongs to the intron maturase 2 family. MatK subfamily.

The protein localises to the plastid. The protein resides in the chloroplast. Its function is as follows. Usually encoded in the trnK tRNA gene intron. Probably assists in splicing its own and other chloroplast group II introns. This chain is Maturase K, found in Trillium maculatum (Spotted wakerobin).